We begin with the raw amino-acid sequence, 431 residues long: Na(+)-translocating NADH-quinone reductase subunit F (431 aa).

A helical membrane pass occupies residues 10–30 (ISIASLVFCVIGLILSGVILI). A 2Fe-2S ferredoxin-type domain is found at 41-133 (CKLKINNDDS…DMNLEIEERY (93 aa)). Residues C76, C82, C85, and C117 each contribute to the [2Fe-2S] cluster site. The 151-residue stretch at 136-286 (ASSWEGTVVS…SGPYGESFMK (151 aa)) folds into the FAD-binding FR-type domain.

Belongs to the NqrF family. Composed of six subunits; NqrA, NqrB, NqrC, NqrD, NqrE and NqrF. Requires [2Fe-2S] cluster as cofactor. FAD is required as a cofactor.

The protein localises to the cell inner membrane. The catalysed reaction is a ubiquinone + n Na(+)(in) + NADH + H(+) = a ubiquinol + n Na(+)(out) + NAD(+). Its function is as follows. NQR complex catalyzes the reduction of ubiquinone-1 to ubiquinol by two successive reactions, coupled with the transport of Na(+) ions from the cytoplasm to the periplasm. The first step is catalyzed by NqrF, which accepts electrons from NADH and reduces ubiquinone-1 to ubisemiquinone by a one-electron transfer pathway. The chain is Na(+)-translocating NADH-quinone reductase subunit F from Chlamydia felis (strain Fe/C-56) (Chlamydophila felis).